The primary structure comprises 656 residues: Vi polysaccharide export protein VexE (656 aa).

May be involved in translocation of the Vi antigen. The polypeptide is Vi polysaccharide export protein VexE (vexE) (Salmonella typhi).